Reading from the N-terminus, the 296-residue chain is MDIRQFRHFAAVAETLHFGRAAERLGITQPPLSQSIQALEKALGAPLFARTKRHVELTALGRQWLPHVLEALAAVDALPDTARRLRDGQTGYLSLSFVSTADYSVLPDLVRRYAEAFPGVEIQLVEATSDVQVPAIQAGERHAGIIIPPPNRSLPAALAYRRLVSEPLVAVTPEAWGAEGPLDLAALADVPLVLFPRTVAPAFHDLVTGYVAARGQPVRIVQEAIQMQTIISLVSAGLGMALAPASLRKLARVGVRYVDLVDPPILETGLVWRRDEAAPTLQGLLRLVTEDGSAPD.

The region spanning 1 to 58 (MDIRQFRHFAAVAETLHFGRAAERLGITQPPLSQSIQALEKALGAPLFARTKRHVELT) is the HTH lysR-type domain. Residues 18–37 (FGRAAERLGITQPPLSQSIQ) constitute a DNA-binding region (H-T-H motif).

This sequence belongs to the LysR transcriptional regulatory family.

Functionally, positively regulates the expression of the ilvD gene while negatively autoregulating its own expression. This chain is HTH-type transcriptional regulator IlvR (ilvR), found in Caulobacter vibrioides (strain ATCC 19089 / CIP 103742 / CB 15) (Caulobacter crescentus).